Here is a 409-residue protein sequence, read N- to C-terminus: Isocitrate dehydrogenase [NADP] 1 (409 aa).

NADP(+) contacts are provided by lysine 75, threonine 78, threonine 80, and arginine 85. Residues aspartate 255, aspartate 278, and aspartate 282 each coordinate Mn(2+). 5 residues coordinate NADP(+): glycine 313, threonine 314, valine 315, histidine 318, and asparagine 331.

This sequence belongs to the isocitrate and isopropylmalate dehydrogenases family. In terms of assembly, homodimer. It depends on Mg(2+) as a cofactor. Mn(2+) is required as a cofactor.

The catalysed reaction is D-threo-isocitrate + NADP(+) = 2-oxoglutarate + CO2 + NADPH. Catalyzes the oxidative decarboxylation of isocitrate to 2-oxoglutarate and carbon dioxide with the concomitant reduction of NADP(+). This is Isocitrate dehydrogenase [NADP] 1 (icd) from Mycobacterium bovis (strain ATCC BAA-935 / AF2122/97).